Here is a 370-residue protein sequence, read N- to C-terminus: Aminomethyltransferase (370 aa).

The protein belongs to the GcvT family. As to quaternary structure, the glycine cleavage system is composed of four proteins: P, T, L and H.

It catalyses the reaction N(6)-[(R)-S(8)-aminomethyldihydrolipoyl]-L-lysyl-[protein] + (6S)-5,6,7,8-tetrahydrofolate = N(6)-[(R)-dihydrolipoyl]-L-lysyl-[protein] + (6R)-5,10-methylene-5,6,7,8-tetrahydrofolate + NH4(+). In terms of biological role, the glycine cleavage system catalyzes the degradation of glycine. The protein is Aminomethyltransferase of Clostridium botulinum (strain Okra / Type B1).